A 266-amino-acid chain; its full sequence is MKTFAAYVIIACLSSTALAGSITENTSWNKEFSAEAVNGVFVLCKSSSKSCATNDLARASKEYLPASTFKIPNAIIGLETGVIKNEHQVFKWDGKPRAMKQWERDLTLRGAIQVSAVPVFQQIAREVGEVRMQKYLKKFSYGNQNISGGIDKFWLEGQLRISAVNQVEFLESLYLNKLSASKENQLIVKEALVTEAAPEYLVHSKTGFSGVGTESNPGVAWWVGWVEKETEVYFFAFNMDIDNESKLPLRKSIPTKIMESEGIIGG.

Residues 1–19 (MKTFAAYVIIACLSSTALA) form the signal peptide. A disulfide bridge connects residues cysteine 44 and cysteine 51. Serine 67 (acyl-ester intermediate) is an active-site residue. N6-carboxylysine is present on lysine 70. Residues serine 115, threonine 206, phenylalanine 208, and arginine 250 each coordinate a beta-lactam.

The protein belongs to the class-D beta-lactamase family. Dimer.

It localises to the periplasm. It carries out the reaction a beta-lactam + H2O = a substituted beta-amino acid. With respect to regulation, activated, with respect to most beta-lactam substrates, in the presence of 0.05 M sodium bicarbonate. Class D beta-lactamase which confers resistance to the beta-lactam antibiotics, including penicillin, carbenicillin and oxacillin, and also some cephalosporins. Confers weak resistance to some carbapenems, in E.coli strain C600Z1. Acts via hydrolysis of the beta-lactam ring. Has penicillin- and cephalosporin-hydrolyzing activities. The chain is Beta-lactamase OXA-10 from Pseudomonas aeruginosa.